Here is a 177-residue protein sequence, read N- to C-terminus: Chorismate pyruvate-lyase (177 aa).

Residues M36, R78, L116, and E157 each coordinate substrate.

This sequence belongs to the UbiC family. Monomer.

It is found in the cytoplasm. It catalyses the reaction chorismate = 4-hydroxybenzoate + pyruvate. The protein operates within cofactor biosynthesis; ubiquinone biosynthesis. Functionally, removes the pyruvyl group from chorismate, with concomitant aromatization of the ring, to provide 4-hydroxybenzoate (4HB) for the ubiquinone pathway. The sequence is that of Chorismate pyruvate-lyase from Pectobacterium atrosepticum (strain SCRI 1043 / ATCC BAA-672) (Erwinia carotovora subsp. atroseptica).